The sequence spans 4061 residues: Hybrid PKS-NRPS synthetase tasS (4061 aa).

Residues glutamine 7–glycine 472 enclose the Ketosynthase family 3 (KS3) domain. Cysteine 180 is an active-site residue. The tract at residues valine 586–leucine 911 is malonyl-CoA:ACP transacylase (MAT) domain. Positions histidine 977–proline 1113 are N-terminal hotdog fold. The interval histidine 977–glycine 1280 is dehydratase (DH) domain. Residues histidine 977 to glutamine 1282 form the PKS/mFAS DH domain. Histidine 1010 (proton acceptor; for dehydratase activity) is an active-site residue. Residues leucine 1128–glutamine 1282 are C-terminal hotdog fold. The Proton donor; for dehydratase activity role is filled by aspartate 1188. The methyltransferase (MT) domain stretch occupies residues leucine 1425–proline 1619. The interval threonine 2153–glycine 2325 is ketoreductase (KR) domain. The Carrier 1 domain maps to glutamate 2437–leucine 2516. Serine 2475 bears the O-(pantetheine 4'-phosphoryl)serine mark. Positions glutamate 2527–serine 2617 are disordered. Low complexity predominate over residues threonine 2556–serine 2576. Residues glutamate 2577–glutamate 2592 show a composition bias toward polar residues. Residues glutamine 2632–glutamate 3077 are condensation (C) domain. The interval glutamine 3103 to isoleucine 3510 is adenylation (A) (KR) domain. Residues glutamine 3633 to valine 3712 form the Carrier 2 domain. An O-(pantetheine 4'-phosphoryl)serine modification is found at serine 3672. The interval aspartate 3813–alanine 3969 is reductase (RED) domain.

In the C-terminal section; belongs to the NRP synthetase family.

The enzyme catalyses (2S,4S)-4-hydroxy-4-methylglutamate + 8 malonyl-CoA + 3 S-adenosyl-L-methionine + ATP + 8 NADPH + 11 H(+) = (2S)-3-[(2S)-3,5-dioxo-4-[(2E,4R,6R,8E,10E,12E)-4,6,12-trimethyltetradeca-2,8,10,12-tetraenoyl]pyrrolidin-2-yl]-2-hydroxy-2-methylpropanoate + AMP + 3 S-adenosyl-L-homocysteine + 8 CO2 + diphosphate + 8 NADP(+) + 8 CoA + 6 H2O. The protein operates within secondary metabolite biosynthesis. Functionally, hybrid PKS-NRPS synthetase; part of the gene cluster that mediates the biosynthesis of the tetramic acids Sch210971 and Sch210972, potential anti-HIV fungal natural product that contain a decalin core. The PKS module of tasS together with the enoylreductase tasC catalyze the formation of the polyketide unit which is then conjugated to 4-hydroxyl-4-methyl glutamate (HMG) by the condensation domain of the tasS NRPS module. One unique structural feature of Sch210971 and Sch210972 is the tetramic acid motif proposed to be derived from the non-proteinogenic amino acid HMG, by a Dieckmann-type condensation catalyzed by the reductase domain of tasS. The aldolase tasA catalyzes the aldol condensation of 2 molecules of pyruvic acid to yield the intermediate 4-hydroxyl-4-methyl-2-oxoglutarate (HMOG), which can then be stereoselectively transaminated, may be by tasG, to form HMG. The Diels-Alderase tas3 then uses the Dieckmann product of tasS as substrate and catalyzes the Diels-Alder cycloaddition to form the decalin ring of Sch210971 and Sch210972. This Hapsidospora irregularis protein is Hybrid PKS-NRPS synthetase tasS.